The primary structure comprises 229 residues: Large ribosomal subunit protein uL1 (229 aa).

It belongs to the universal ribosomal protein uL1 family. Part of the 50S ribosomal subunit.

Its function is as follows. Binds directly to 23S rRNA. The L1 stalk is quite mobile in the ribosome, and is involved in E site tRNA release. In terms of biological role, protein L1 is also a translational repressor protein, it controls the translation of the L11 operon by binding to its mRNA. This chain is Large ribosomal subunit protein uL1, found in Streptococcus gordonii (strain Challis / ATCC 35105 / BCRC 15272 / CH1 / DL1 / V288).